We begin with the raw amino-acid sequence, 291 residues long: uncharacterized protein (291 aa).

Disordered stretches follow at residues 29-50 and 168-291; these read SEKP…LRDS and RKVK…AELK. Residue Ser-50 is modified to Phosphoserine. Composition is skewed to polar residues over residues 176–186 and 205–217; these read NSKNPSKTGTP and QKNS…SKLI. Over residues 221–237 the composition is skewed to basic and acidic residues; it reads YKDEWLQQQKAEADRRT. Over residues 280-291 the composition is skewed to polar residues; the sequence is SSPSESTPAELK.

This is an uncharacterized protein from Mus musculus (Mouse).